The primary structure comprises 669 residues: DNA ligase (669 aa).

NAD(+) is bound by residues 32-36, 81-82, and Glu-111; these read DAEYD and SL. Catalysis depends on Lys-113, which acts as the N6-AMP-lysine intermediate. 4 residues coordinate NAD(+): Arg-134, Glu-171, Lys-290, and Lys-314. Zn(2+)-binding residues include Cys-408, Cys-411, Cys-426, and Cys-432. Residues 591 to 669 enclose the BRCT domain; sequence EEALSLKGQT…EAELLAILGS (79 aa).

It belongs to the NAD-dependent DNA ligase family. LigA subfamily. It depends on Mg(2+) as a cofactor. The cofactor is Mn(2+).

The enzyme catalyses NAD(+) + (deoxyribonucleotide)n-3'-hydroxyl + 5'-phospho-(deoxyribonucleotide)m = (deoxyribonucleotide)n+m + AMP + beta-nicotinamide D-nucleotide.. Functionally, DNA ligase that catalyzes the formation of phosphodiester linkages between 5'-phosphoryl and 3'-hydroxyl groups in double-stranded DNA using NAD as a coenzyme and as the energy source for the reaction. It is essential for DNA replication and repair of damaged DNA. The polypeptide is DNA ligase (Shewanella loihica (strain ATCC BAA-1088 / PV-4)).